We begin with the raw amino-acid sequence, 281 residues long: uncharacterized protein (281 aa).

4 helical membrane-spanning segments follow: residues alanine 8–serine 28, leucine 97–glycine 117, proline 147–valine 167, and isoleucine 210–alanine 230.

The protein to S.pombe bem46 and yeast YNL320w.

It localises to the cell membrane. This is an uncharacterized protein from Mycobacterium tuberculosis (strain ATCC 25618 / H37Rv).